A 152-amino-acid chain; its full sequence is UPF0266 membrane protein YobD (152 aa).

Helical transmembrane passes span 6–26, 45–65, and 67–87; these read LVLILFIAALLAYALYDQFIM, VDSVIFVGLVAILIYNNVTSH, and AQMTTWLLSALALMGFYIFWI.

This sequence belongs to the UPF0266 family.

The protein localises to the cell inner membrane. This chain is UPF0266 membrane protein YobD, found in Salmonella choleraesuis (strain SC-B67).